Consider the following 305-residue polypeptide: MSVRHFLSFMDYSPEELIGLIRRGSELKDLRNRGVLYEPLKSRVLGMVFEKASTRTRLSFEAGMIQLGGQAIFLSPRDTQLGRGEPIGDSARVMSRMLDGVMIRTFAHATLTEFAAHSKVPVINGLSDDLHPCQLLADMQTFHEHRGSIQGKTVAWIGDGNNMCNSYIEAALKFDFQLRVACPEGYEPKAEFVALAGDRLRVVRDPREAVAGAHLVSTDVWASMGQEDEAAARIALFRPYQVNAALLDGAADDVLFMHCLPAHRGEEISEELLDDPRSVAWDQAENRLHAQKALLELLIEHAHYA.

Residues 53 to 56 (STRT), Gln-80, Arg-104, and 131 to 134 (HPCQ) contribute to the carbamoyl phosphate site. L-ornithine-binding positions include Asn-162, Asp-219, and 223–224 (SM). Carbamoyl phosphate contacts are provided by residues 259 to 260 (CL) and Arg-287.

It belongs to the aspartate/ornithine carbamoyltransferase superfamily. OTCase family. Homotrimer.

Its subcellular location is the cytoplasm. The catalysed reaction is carbamoyl phosphate + L-ornithine = L-citrulline + phosphate + H(+). Its pathway is amino-acid biosynthesis; L-arginine biosynthesis; L-arginine from L-ornithine and carbamoyl phosphate: step 1/3. Its function is as follows. Reversibly catalyzes the transfer of the carbamoyl group from carbamoyl phosphate (CP) to the N(epsilon) atom of ornithine (ORN) to produce L-citrulline, which is a substrate for argininosuccinate synthetase (ArgG) involved in the final step in arginine biosynthesis. In Pseudomonas aeruginosa (strain ATCC 15692 / DSM 22644 / CIP 104116 / JCM 14847 / LMG 12228 / 1C / PRS 101 / PAO1), this protein is Ornithine carbamoyltransferase, anabolic.